The chain runs to 1173 residues: Clustered mitochondria protein homolog (1173 aa).

Residues 1–21 (MSTIDLPTSSLPGSSGDPSGT) are compositionally biased toward low complexity. Residues 1 to 25 (MSTIDLPTSSLPGSSGDPSGTEMSH) form a disordered region. The Clu domain occupies 316–565 (VPHRADLSRT…SLFPLDAQFL (250 aa)). A disordered region spans residues 888–910 (KFTGKKGNKKKRNLGKSQNTTNR). The segment covering 890–901 (TGKKGNKKKRNL) has biased composition (basic residues). One copy of the TPR repeat lies at 984-1017 (ARAYCQLAMIYHQLEKKEEAVELARKAVIVCERF).

It belongs to the CLU family. May associate with the eukaryotic translation initiation factor 3 (eIF-3) complex.

The protein localises to the cytoplasm. In terms of biological role, mRNA-binding protein involved in proper cytoplasmic distribution of mitochondria. The polypeptide is Clustered mitochondria protein homolog (Schizosaccharomyces pombe (strain 972 / ATCC 24843) (Fission yeast)).